We begin with the raw amino-acid sequence, 384 residues long: Substance-K receptor (384 aa).

Residues 1-32 (MGAHASVTDTNILSGLESNATGVTAFSMPGWQ) are Extracellular-facing. A glycan (N-linked (GlcNAc...) asparagine) is linked at Asn-19. Residues 33–56 (LALWATAYLALVLVAVTGNATVIW) form a helical membrane-spanning segment. Topologically, residues 57–69 (IILAHERMRTVTN) are cytoplasmic. Residues 70–90 (YFIINLALADLCMAAFNATFN) form a helical membrane-spanning segment. The Extracellular segment spans residues 91–107 (FIYASHNIWYFGSTFCY). Cys-106 and Cys-181 are disulfide-bonded. Residues 108-129 (FQNLFPVTAMFVSIYSMTAIAA) traverse the membrane as a helical segment. Residues 130–149 (DRYMAIVHPFQPRLSAPSTK) lie on the Cytoplasmic side of the membrane. The chain crosses the membrane as a helical span at residues 150-170 (AVIAVIWLVALALASPQCFYS). At 171 to 196 (TITVDQGATKCVVAWPNDNGGKMLLL) the chain is on the extracellular side. A helical membrane pass occupies residues 197–218 (YHLVVFVLIYFLPLVVMFAAYS). Residues 219 to 251 (VIGLTLWKRAVPRHQAHGANLRHLQAKKKFVKA) lie on the Cytoplasmic side of the membrane. Residues 252-272 (MVLVVVTFAICWLPYHLYFIL) traverse the membrane as a helical segment. The Extracellular segment spans residues 273 to 290 (GTFQEDIYYRKFIQQVYL). Residues 291-310 (ALFWLAMSSTMYNPIIYCCL) traverse the membrane as a helical segment. The Cytoplasmic segment spans residues 311–384 (NHRFRSGFRL…GPQDGEPAGP (74 aa)). Residue Cys-324 is the site of S-palmitoyl cysteine attachment. Residues 365-384 (HSEATNGQVGGPQDGEPAGP) are disordered.

Belongs to the G-protein coupled receptor 1 family.

The protein localises to the cell membrane. In terms of biological role, this is a receptor for the tachykinin neuropeptide substance K (neurokinin A). It is associated with G proteins that activate a phosphatidylinositol-calcium second messenger system. The rank order of affinity of this receptor to tachykinins is: substance K &gt; neuromedin-K &gt; substance P. The sequence is that of Substance-K receptor (Tacr2) from Mus musculus (Mouse).